Here is a 347-residue protein sequence, read N- to C-terminus: NADH-quinone oxidoreductase subunit H (347 aa).

The next 9 helical transmembrane spans lie at 13–33, 50–70, 82–102, 115–135, 161–181, 198–218, 263–283, 286–306, and 321–341; these read IIMIGQSLLLLVCLLVFIAYV, PNVVGPFGLFQSFADLLKFVF, AVFLLAPLVTVLLALSTWAVV, VGILYIFAISSLEVYGIIMGG, IGFVIVTVLLCVGSLNLTDIV, FLDWHWLSLFPMFIIFFISAL, CSLTTILFLGGWLPPVDIWIL, VPGIIWFMLKACFVFFMFAMV, and LGWKVFLPLSLAMVIIVAFVL.

It belongs to the complex I subunit 1 family. As to quaternary structure, NDH-1 is composed of 14 different subunits. Subunits NuoA, H, J, K, L, M, N constitute the membrane sector of the complex.

It is found in the cell inner membrane. It catalyses the reaction a quinone + NADH + 5 H(+)(in) = a quinol + NAD(+) + 4 H(+)(out). Its function is as follows. NDH-1 shuttles electrons from NADH, via FMN and iron-sulfur (Fe-S) centers, to quinones in the respiratory chain. The immediate electron acceptor for the enzyme in this species is believed to be ubiquinone. Couples the redox reaction to proton translocation (for every two electrons transferred, four hydrogen ions are translocated across the cytoplasmic membrane), and thus conserves the redox energy in a proton gradient. This subunit may bind ubiquinone. In Rhizobium leguminosarum bv. trifolii (strain WSM2304), this protein is NADH-quinone oxidoreductase subunit H.